Reading from the N-terminus, the 78-residue chain is Large ribosomal subunit protein bL28 (78 aa).

Residues 1–21 are disordered; the sequence is MSRVCQVTGKRPMSGNNRSHA.

This sequence belongs to the bacterial ribosomal protein bL28 family.

The sequence is that of Large ribosomal subunit protein bL28 from Photorhabdus laumondii subsp. laumondii (strain DSM 15139 / CIP 105565 / TT01) (Photorhabdus luminescens subsp. laumondii).